Reading from the N-terminus, the 391-residue chain is Phosphoglycerate kinase (391 aa).

Substrate-binding positions include 21–23 (DLN), R36, 59–62 (HLGR), R113, and R146. ATP is bound by residues K197, E319, and 345–348 (GGDT).

This sequence belongs to the phosphoglycerate kinase family. As to quaternary structure, monomer.

Its subcellular location is the cytoplasm. The enzyme catalyses (2R)-3-phosphoglycerate + ATP = (2R)-3-phospho-glyceroyl phosphate + ADP. It functions in the pathway carbohydrate degradation; glycolysis; pyruvate from D-glyceraldehyde 3-phosphate: step 2/5. This chain is Phosphoglycerate kinase, found in Shewanella sp. (strain W3-18-1).